Consider the following 60-residue polypeptide: Conotoxin Cal6.20 (60 aa).

The N-terminal stretch at 1–22 is a signal peptide; that stretch reads MKLTCVLIVAVLILTACQVIAA. 3 cysteine pairs are disulfide-bonded: Cys32–Cys42, Cys35–Cys48, and Cys41–Cys55.

It belongs to the conotoxin O1 superfamily. Expressed by the venom duct.

The protein resides in the secreted. Its function is as follows. Probable neurotoxin. In Californiconus californicus (California cone), this protein is Conotoxin Cal6.20.